We begin with the raw amino-acid sequence, 665 residues long: Soluble lamin-associated protein of 75 kDa (665 aa).

Residues 309-665 are disordered; sequence AFASTSEGPE…GPGKKKAKLT (357 aa). Polar residues predominate over residues 311–326; that stretch reads ASTSEGPEKTPVSTRT. Residues 327–338 show a composition bias toward basic residues; the sequence is RSSHLKRPKIGK. Residues Ser348 and Ser377 each carry the phosphoserine modification. Residues 376 to 397 show a composition bias toward acidic residues; sequence SSEEFLEEEPEQGVIDFEDESG. Basic and acidic residues predominate over residues 412–421; that stretch reads QKQDGDKDSA. Residues 440–451 are compositionally biased toward acidic residues; sequence TEDEDSTSEGLE. Residues Ser447 and Ser512 each carry the phosphoserine modification. Composition is skewed to polar residues over residues 521-533 and 553-566; these read LGSS…VSNI and VSQN…SSVE. Residues Ser610, Ser613, and Ser630 each carry the phosphoserine modification. The segment covering 646 to 665 has biased composition (basic residues); that stretch reads NLRRKAKGHKGPGKKKAKLT.

Belongs to the FAM169 family.

It is found in the nucleus envelope. The protein resides in the nucleus inner membrane. This Mus musculus (Mouse) protein is Soluble lamin-associated protein of 75 kDa (Fam169a).